A 65-amino-acid chain; its full sequence is Protein C13 (65 aa).

This sequence belongs to the poxviridae C13 protein family.

The polypeptide is Protein C13 (Vaccinia virus (strain Copenhagen) (VACV)).